The chain runs to 347 residues: Quinolinate synthase (347 aa).

2 residues coordinate iminosuccinate: H47 and S68. C113 provides a ligand contact to [4Fe-4S] cluster. Iminosuccinate-binding positions include 139 to 141 (YAN) and S156. C200 lines the [4Fe-4S] cluster pocket. Iminosuccinate is bound by residues 226–228 (HPE) and T243. C297 contributes to the [4Fe-4S] cluster binding site.

The protein belongs to the quinolinate synthase family. Type 1 subfamily. The cofactor is [4Fe-4S] cluster.

The protein resides in the cytoplasm. The enzyme catalyses iminosuccinate + dihydroxyacetone phosphate = quinolinate + phosphate + 2 H2O + H(+). Its pathway is cofactor biosynthesis; NAD(+) biosynthesis; quinolinate from iminoaspartate: step 1/1. Functionally, catalyzes the condensation of iminoaspartate with dihydroxyacetone phosphate to form quinolinate. In Escherichia coli O9:H4 (strain HS), this protein is Quinolinate synthase.